The primary structure comprises 76 residues: Spore germination protein-like protein YdzR (76 aa).

This sequence belongs to the GerPA/GerPF family.

This is Spore germination protein-like protein YdzR (ydzR) from Bacillus subtilis (strain 168).